We begin with the raw amino-acid sequence, 379 residues long: tRNA 2-selenouridine synthase (379 aa).

The region spanning 15-138 (FQQNIPLMDV…ARNYLIKQIE (124 aa)) is the Rhodanese domain. Cysteine 98 serves as the catalytic S-selanylcysteine intermediate.

The protein belongs to the SelU family. As to quaternary structure, monomer.

It carries out the reaction 5-methylaminomethyl-2-thiouridine(34) in tRNA + selenophosphate + (2E)-geranyl diphosphate + H2O + H(+) = 5-methylaminomethyl-2-selenouridine(34) in tRNA + (2E)-thiogeraniol + phosphate + diphosphate. The catalysed reaction is 5-methylaminomethyl-2-thiouridine(34) in tRNA + (2E)-geranyl diphosphate = 5-methylaminomethyl-S-(2E)-geranyl-thiouridine(34) in tRNA + diphosphate. It catalyses the reaction 5-methylaminomethyl-S-(2E)-geranyl-thiouridine(34) in tRNA + selenophosphate + H(+) = 5-methylaminomethyl-2-(Se-phospho)selenouridine(34) in tRNA + (2E)-thiogeraniol. The enzyme catalyses 5-methylaminomethyl-2-(Se-phospho)selenouridine(34) in tRNA + H2O = 5-methylaminomethyl-2-selenouridine(34) in tRNA + phosphate. In terms of biological role, involved in the post-transcriptional modification of the uridine at the wobble position (U34) of tRNA(Lys), tRNA(Glu) and tRNA(Gln). Catalyzes the conversion of 2-thiouridine (S2U-RNA) to 2-selenouridine (Se2U-RNA). Acts in a two-step process involving geranylation of 2-thiouridine (S2U) to S-geranyl-2-thiouridine (geS2U) and subsequent selenation of the latter derivative to 2-selenouridine (Se2U) in the tRNA chain. In Bdellovibrio bacteriovorus (strain ATCC 15356 / DSM 50701 / NCIMB 9529 / HD100), this protein is tRNA 2-selenouridine synthase.